The sequence spans 451 residues: Phosphoglucosamine mutase (451 aa).

The active-site Phosphoserine intermediate is the serine 102. Mg(2+) contacts are provided by serine 102, aspartate 243, aspartate 245, and aspartate 247. Serine 102 is subject to Phosphoserine.

It belongs to the phosphohexose mutase family. The cofactor is Mg(2+). Post-translationally, activated by phosphorylation.

The catalysed reaction is alpha-D-glucosamine 1-phosphate = D-glucosamine 6-phosphate. Catalyzes the conversion of glucosamine-6-phosphate to glucosamine-1-phosphate. The polypeptide is Phosphoglucosamine mutase (Salinispora arenicola (strain CNS-205)).